Consider the following 299-residue polypeptide: Dye-decolorizing peroxidase YfeX (299 aa).

Histidine 215 contacts heme.

The protein belongs to the DyP-type peroxidase family. Heme b serves as cofactor.

Its subcellular location is the cytoplasm. In terms of biological role, has both general peroxidase activity and dye-decolorizing activity. Can catalyze the oxidation of 2,2'-azino-bis(3-ethylbenzothiazoline-6-sulphonic acid) (ABTS), and the phenolic compounds guaiacol and catechol. Also decolorizes the anthraquinone dye reactive blue 19 (RB19). This chain is Dye-decolorizing peroxidase YfeX, found in Escherichia coli O157:H7.